A 127-amino-acid chain; its full sequence is UPF0325 protein VP2321 (127 aa).

Belongs to the UPF0325 family.

This Vibrio parahaemolyticus serotype O3:K6 (strain RIMD 2210633) protein is UPF0325 protein VP2321.